The sequence spans 571 residues: Proline--tRNA ligase (571 aa).

This sequence belongs to the class-II aminoacyl-tRNA synthetase family. ProS type 1 subfamily. As to quaternary structure, homodimer.

The protein localises to the cytoplasm. The enzyme catalyses tRNA(Pro) + L-proline + ATP = L-prolyl-tRNA(Pro) + AMP + diphosphate. Its function is as follows. Catalyzes the attachment of proline to tRNA(Pro) in a two-step reaction: proline is first activated by ATP to form Pro-AMP and then transferred to the acceptor end of tRNA(Pro). As ProRS can inadvertently accommodate and process non-cognate amino acids such as alanine and cysteine, to avoid such errors it has two additional distinct editing activities against alanine. One activity is designated as 'pretransfer' editing and involves the tRNA(Pro)-independent hydrolysis of activated Ala-AMP. The other activity is designated 'posttransfer' editing and involves deacylation of mischarged Ala-tRNA(Pro). The misacylated Cys-tRNA(Pro) is not edited by ProRS. In Pseudoalteromonas atlantica (strain T6c / ATCC BAA-1087), this protein is Proline--tRNA ligase.